The primary structure comprises 494 residues: Glutamyl-tRNA(Gln) amidotransferase subunit A (494 aa).

Catalysis depends on charge relay system residues lysine 81 and serine 156. The Acyl-ester intermediate role is filled by serine 180.

It belongs to the amidase family. GatA subfamily. In terms of assembly, heterotrimer of A, B and C subunits.

It carries out the reaction L-glutamyl-tRNA(Gln) + L-glutamine + ATP + H2O = L-glutaminyl-tRNA(Gln) + L-glutamate + ADP + phosphate + H(+). Functionally, allows the formation of correctly charged Gln-tRNA(Gln) through the transamidation of misacylated Glu-tRNA(Gln) in organisms which lack glutaminyl-tRNA synthetase. The reaction takes place in the presence of glutamine and ATP through an activated gamma-phospho-Glu-tRNA(Gln). This chain is Glutamyl-tRNA(Gln) amidotransferase subunit A, found in Mycolicibacterium gilvum (strain PYR-GCK) (Mycobacterium gilvum (strain PYR-GCK)).